The primary structure comprises 186 residues: Ribosome-recycling factor (186 aa).

It belongs to the RRF family.

Its subcellular location is the cytoplasm. Responsible for the release of ribosomes from messenger RNA at the termination of protein biosynthesis. May increase the efficiency of translation by recycling ribosomes from one round of translation to another. This chain is Ribosome-recycling factor, found in Burkholderia mallei (strain NCTC 10247).